The primary structure comprises 260 residues: MTNDDLTITDPKMRAQGVNVFYGDKQAINNVSIDVGTDLVTAFIGPSGCGKSTFLRSLNRMNDTVASAKVTGKIELDGEDIYAPSMDVVQLRARVGMVFQKPNPFPKSIYDNVGYGPRIHGLAPSKADLDVVVERALVRAGLWDEVKDRLNESGTALSGGQQQRLCIARAIAVDPEVILMDEPCSALDPIATAKIEELIHELRGKYAIVIVTHNMQQAARVSQRTAFFHLGTLVEYGKTTDIFTNPKQERTKDYITGRYG.

The ABC transporter domain occupies 13–255 (MRAQGVNVFY…PKQERTKDYI (243 aa)). 45–52 (GPSGCGKS) provides a ligand contact to ATP.

Belongs to the ABC transporter superfamily. Phosphate importer (TC 3.A.1.7) family. As to quaternary structure, the complex is composed of two ATP-binding proteins (PstB), two transmembrane proteins (PstC and PstA) and a solute-binding protein (PstS).

Its subcellular location is the cell inner membrane. It carries out the reaction phosphate(out) + ATP + H2O = ADP + 2 phosphate(in) + H(+). Functionally, part of the ABC transporter complex PstSACB involved in phosphate import. Responsible for energy coupling to the transport system. The polypeptide is Phosphate import ATP-binding protein PstB (Sphingopyxis alaskensis (strain DSM 13593 / LMG 18877 / RB2256) (Sphingomonas alaskensis)).